The chain runs to 374 residues: tRNA-specific 2-thiouridylase MnmA (374 aa).

Residues 12 to 19 (GMSGGVDS) and Met-38 each bind ATP. The segment at 98–100 (NPD) is interaction with target base in tRNA. The active-site Nucleophile is Cys-103. Residues Cys-103 and Cys-207 are joined by a disulfide bond. Gly-128 contacts ATP. The interval 157–159 (KDQ) is interaction with tRNA. The active-site Cysteine persulfide intermediate is the Cys-207. Residues 321 to 322 (RY) are interaction with tRNA.

This sequence belongs to the MnmA/TRMU family.

It is found in the cytoplasm. It catalyses the reaction S-sulfanyl-L-cysteinyl-[protein] + uridine(34) in tRNA + AH2 + ATP = 2-thiouridine(34) in tRNA + L-cysteinyl-[protein] + A + AMP + diphosphate + H(+). In terms of biological role, catalyzes the 2-thiolation of uridine at the wobble position (U34) of tRNA, leading to the formation of s(2)U34. In Aliivibrio fischeri (strain ATCC 700601 / ES114) (Vibrio fischeri), this protein is tRNA-specific 2-thiouridylase MnmA.